An 88-amino-acid polypeptide reads, in one-letter code: Small ribosomal subunit protein uS17 (88 aa).

Belongs to the universal ribosomal protein uS17 family. In terms of assembly, part of the 30S ribosomal subunit.

One of the primary rRNA binding proteins, it binds specifically to the 5'-end of 16S ribosomal RNA. This chain is Small ribosomal subunit protein uS17, found in Pseudomonas fluorescens (strain SBW25).